The sequence spans 1121 residues: Cuscuta receptor 1 (1121 aa).

A signal peptide spans Met1–Gly20. Residues Cys21–Gln1058 are Extracellular-facing. Residue Asn91 is glycosylated (N-linked (GlcNAc...) asparagine). LRR repeat units lie at residues Phe98–Lys122, Leu126–Ser152, Leu185–Glu209, Leu210–Ile233, Phe234–Leu259, Ser260–Lys282, Met284–Ser308, and Phe309–Leu331. N-linked (GlcNAc...) asparagine glycosylation is present at Asn224. Residues Asn298, Asn321, and Asn333 are each glycosylated (N-linked (GlcNAc...) asparagine). One copy of the LRR 9 repeat lies at Leu334 to Ser360. Asn372 and Asn406 each carry an N-linked (GlcNAc...) asparagine glycan. LRR repeat units follow at residues Leu383–Asn406, Leu407–Arg432, Leu433–Asp457, Lys459–Asn479, Gln507–Asn531, His556–Ala580, Phe581–Ile605, Leu607–Val628, Ser630–Pro654, His655–Ser678, Leu680–Asn701, Arg702–Leu725, Lys726–Leu749, Leu751–Phe772, Ser773–Leu796, Ser797–Leu820, Asn822–Gln846, Leu914–Met938, Ser939–Asn961, Leu962–Leu986, and Ser988–Thr1012. N-linked (GlcNAc...) asparagine glycosylation is found at Asn531, Asn576, and Asn588. Asn689 carries an N-linked (GlcNAc...) asparagine glycan. Asn771 carries an N-linked (GlcNAc...) asparagine glycan. N-linked (GlcNAc...) asparagine glycosylation is found at Asn822, Asn937, Asn945, Asn976, Asn998, Asn1014, and Asn1041. Residues Cys1059 to Leu1079 form a helical membrane-spanning segment. The Cytoplasmic segment spans residues Cys1080–Gly1121.

The protein belongs to the RLP family. Interacts with an 11 kDa glycine-rich protein (GRP) of C.reflexa. Interacts with SOBIR1 and SOBIR1-like kinases; presence or absence of GRP has no effect on interaction.

It is found in the cell membrane. The protein resides in the cell surface. Functionally, involved in plant defense. Contributes to resistance against parasitic plant C.reflexa. Acts as a receptor for the 11 kDa glycine-rich protein (GRP) of C.reflexa inducing immune responses such as emission of stress-related phytohormone ethylene, reactive oxygen species (ROS) release, and hypersensitive cell death. Recognizes a specific pathogen-associated molecular pattern (PAMP), a cysteine-rich peptide 21 (crip21), from GRP located on the cell wall of C.reflexa. This Solanum lycopersicum (Tomato) protein is Cuscuta receptor 1.